We begin with the raw amino-acid sequence, 154 residues long: Myoglobin (154 aa).

The region spanning 2 to 148 is the Globin domain; it reads GLSDQEWQQV…FRNDMASKYK (147 aa). Residue histidine 65 participates in nitrite binding. Histidine 65 lines the O2 pocket. Histidine 94 is a heme b binding site.

It belongs to the globin family. Monomeric.

The protein resides in the cytoplasm. It is found in the sarcoplasm. The enzyme catalyses Fe(III)-heme b-[protein] + nitric oxide + H2O = Fe(II)-heme b-[protein] + nitrite + 2 H(+). It carries out the reaction H2O2 + AH2 = A + 2 H2O. Its function is as follows. Monomeric heme protein which primary function is to store oxygen and facilitate its diffusion within muscle tissues. Reversibly binds oxygen through a pentacoordinated heme iron and enables its timely and efficient release as needed during periods of heightened demand. Depending on the oxidative conditions of tissues and cells, and in addition to its ability to bind oxygen, it also has a nitrite reductase activity whereby it regulates the production of bioactive nitric oxide. Under stress conditions, like hypoxia and anoxia, it also protects cells against reactive oxygen species thanks to its pseudoperoxidase activity. This is Myoglobin (MB) from Gallus gallus (Chicken).